Reading from the N-terminus, the 32-residue chain is Dermatoxin-J1 (32 aa).

Gln-32 is subject to Glutamine amide.

In terms of tissue distribution, expressed by the skin glands.

It localises to the secreted. Antimicrobial peptide. In Phasmahyla jandaia (Jandaia leaf frog), this protein is Dermatoxin-J1.